Here is a 457-residue protein sequence, read N- to C-terminus: Ribosomal protein uS12 methylthiotransferase RimO (457 aa).

Residues 30 to 140 (PTIGMVSLGC…VLDAVHGAVP (111 aa)) form the MTTase N-terminal domain. [4Fe-4S] cluster contacts are provided by Cys-39, Cys-75, Cys-104, Cys-171, Cys-175, and Cys-178. One can recognise a Radical SAM core domain in the interval 157-386 (LTPRHFSYLK…MQKAQAISEA (230 aa)). The TRAM domain occupies 389 to 456 (AARIGQRLEV…EYDLWGRAVL (68 aa)).

This sequence belongs to the methylthiotransferase family. RimO subfamily. [4Fe-4S] cluster serves as cofactor.

The protein resides in the cytoplasm. The catalysed reaction is L-aspartate(89)-[ribosomal protein uS12]-hydrogen + (sulfur carrier)-SH + AH2 + 2 S-adenosyl-L-methionine = 3-methylsulfanyl-L-aspartate(89)-[ribosomal protein uS12]-hydrogen + (sulfur carrier)-H + 5'-deoxyadenosine + L-methionine + A + S-adenosyl-L-homocysteine + 2 H(+). Catalyzes the methylthiolation of an aspartic acid residue of ribosomal protein uS12. The chain is Ribosomal protein uS12 methylthiotransferase RimO from Cereibacter sphaeroides (strain ATCC 17025 / ATH 2.4.3) (Rhodobacter sphaeroides).